Consider the following 732-residue polypeptide: Catalase-peroxidase (732 aa).

Residues 1 to 23 are disordered; sequence MSEQSKCPVTGRTAGHPVAGGGM. Positions 97–220 form a cross-link, tryptophyl-tyrosyl-methioninium (Trp-Tyr) (with M-246); the sequence is WHSAGTYRTS…LAAVQMGLIY (124 aa). Catalysis depends on histidine 98, which acts as the Proton acceptor. The segment at residues 220-246 is a cross-link (tryptophyl-tyrosyl-methioninium (Tyr-Met) (with W-97)); the sequence is YVNPEGPDGNPDPVAAGRDIRETFARM. Histidine 261 contacts heme b.

It belongs to the peroxidase family. Peroxidase/catalase subfamily. As to quaternary structure, homodimer or homotetramer. Requires heme b as cofactor. In terms of processing, formation of the three residue Trp-Tyr-Met cross-link is important for the catalase, but not the peroxidase activity of the enzyme.

It catalyses the reaction H2O2 + AH2 = A + 2 H2O. It carries out the reaction 2 H2O2 = O2 + 2 H2O. In terms of biological role, bifunctional enzyme with both catalase and broad-spectrum peroxidase activity. This is Catalase-peroxidase from Chlorobium limicola (strain DSM 245 / NBRC 103803 / 6330).